The primary structure comprises 485 residues: Aspartyl/glutamyl-tRNA(Asn/Gln) amidotransferase subunit B (485 aa).

It belongs to the GatB/GatE family. GatB subfamily. As to quaternary structure, heterotrimer of A, B and C subunits.

The catalysed reaction is L-glutamyl-tRNA(Gln) + L-glutamine + ATP + H2O = L-glutaminyl-tRNA(Gln) + L-glutamate + ADP + phosphate + H(+). It catalyses the reaction L-aspartyl-tRNA(Asn) + L-glutamine + ATP + H2O = L-asparaginyl-tRNA(Asn) + L-glutamate + ADP + phosphate + 2 H(+). Allows the formation of correctly charged Asn-tRNA(Asn) or Gln-tRNA(Gln) through the transamidation of misacylated Asp-tRNA(Asn) or Glu-tRNA(Gln) in organisms which lack either or both of asparaginyl-tRNA or glutaminyl-tRNA synthetases. The reaction takes place in the presence of glutamine and ATP through an activated phospho-Asp-tRNA(Asn) or phospho-Glu-tRNA(Gln). This Gluconobacter oxydans (strain 621H) (Gluconobacter suboxydans) protein is Aspartyl/glutamyl-tRNA(Asn/Gln) amidotransferase subunit B.